Consider the following 252-residue polypeptide: Geranylgeranylglyceryl phosphate synthase (252 aa).

Residues Asp26 and Ser55 each coordinate Mg(2+). Sn-glycerol 1-phosphate contacts are provided by residues 174 to 180 (YLEAGSG), 205 to 206 (GG), and 227 to 228 (GT).

Belongs to the GGGP/HepGP synthase family. Group II subfamily. The cofactor is Mg(2+).

It localises to the cytoplasm. The catalysed reaction is sn-glycerol 1-phosphate + (2E,6E,10E)-geranylgeranyl diphosphate = sn-3-O-(geranylgeranyl)glycerol 1-phosphate + diphosphate. Its pathway is membrane lipid metabolism; glycerophospholipid metabolism. Prenyltransferase that catalyzes the transfer of the geranylgeranyl moiety of geranylgeranyl diphosphate (GGPP) to the C3 hydroxyl of sn-glycerol-1-phosphate (G1P). This reaction is the first ether-bond-formation step in the biosynthesis of archaeal membrane lipids. This chain is Geranylgeranylglyceryl phosphate synthase, found in Thermococcus gammatolerans (strain DSM 15229 / JCM 11827 / EJ3).